The chain runs to 374 residues: Mitochondrial import inner membrane translocase subunit tim50 (374 aa).

The transit peptide at 1 to 48 (MILNKVAKCYGKQIGFFGNKTTQFIKPNQTIFLIGGTKRLFTTQQQQS) directs the protein to the mitochondrion. A disordered region spans residues 42–97 (TTQQQQSPKKEEPKSEQQKKVEDKTEEKEKEKDEEENENEKEKENEDGEGQKKKSK). Basic and acidic residues-rich tracts occupy residues 49–72 (PKKE…KEKE) and 81–93 (EKEK…EGQK). Residues 103–125 (IVTSVTSTFFAGVLVASTFGYLT) form a helical membrane-spanning segment. The region spanning 191–332 (PGGKKYTLVI…IELLPVLESF (142 aa)) is the FCP1 homology domain.

This sequence belongs to the TIM50 family. As to quaternary structure, component of the mitochondrial import inner membrane translocase complex.

It is found in the mitochondrion inner membrane. Component of the mitochondrial import inner membrane translocase that mediates the translocation of transit peptide-containing proteins across the mitochondrial inner membrane. The protein is Mitochondrial import inner membrane translocase subunit tim50 (timm50) of Dictyostelium discoideum (Social amoeba).